A 445-amino-acid polypeptide reads, in one-letter code: Phosphoglucosamine mutase (445 aa).

Serine 101 serves as the catalytic Phosphoserine intermediate. Positions 101, 240, 242, and 244 each coordinate Mg(2+). Serine 101 bears the Phosphoserine mark.

This sequence belongs to the phosphohexose mutase family. Mg(2+) serves as cofactor. Activated by phosphorylation.

It catalyses the reaction alpha-D-glucosamine 1-phosphate = D-glucosamine 6-phosphate. Its function is as follows. Catalyzes the conversion of glucosamine-6-phosphate to glucosamine-1-phosphate. The polypeptide is Phosphoglucosamine mutase (Pseudomonas fluorescens (strain Pf0-1)).